Consider the following 31-residue polypeptide: Photosystem II reaction center protein M (31 aa).

A helical membrane pass occupies residues 5–25 (ILAFIATALLILVPTAFLLII).

Belongs to the PsbM family. In terms of assembly, PSII is composed of 1 copy each of membrane proteins PsbA, PsbB, PsbC, PsbD, PsbE, PsbF, PsbH, PsbI, PsbJ, PsbK, PsbL, PsbM, PsbT, PsbX, PsbY, PsbZ, Psb30/Ycf12, at least 3 peripheral proteins of the oxygen-evolving complex and a large number of cofactors. It forms dimeric complexes.

Its subcellular location is the plastid membrane. One of the components of the core complex of photosystem II (PSII). PSII is a light-driven water:plastoquinone oxidoreductase that uses light energy to abstract electrons from H(2)O, generating O(2) and a proton gradient subsequently used for ATP formation. It consists of a core antenna complex that captures photons, and an electron transfer chain that converts photonic excitation into a charge separation. This subunit is found at the monomer-monomer interface. The chain is Photosystem II reaction center protein M from Cuscuta reflexa (Southern Asian dodder).